A 184-amino-acid chain; its full sequence is Protein GrpE (184 aa).

The interval 1–26 (MTAPQEPVDSTPESGENAATPGLEDD) is disordered.

It belongs to the GrpE family. In terms of assembly, homodimer.

Its subcellular location is the cytoplasm. Its function is as follows. Participates actively in the response to hyperosmotic and heat shock by preventing the aggregation of stress-denatured proteins, in association with DnaK and GrpE. It is the nucleotide exchange factor for DnaK and may function as a thermosensor. Unfolded proteins bind initially to DnaJ; upon interaction with the DnaJ-bound protein, DnaK hydrolyzes its bound ATP, resulting in the formation of a stable complex. GrpE releases ADP from DnaK; ATP binding to DnaK triggers the release of the substrate protein, thus completing the reaction cycle. Several rounds of ATP-dependent interactions between DnaJ, DnaK and GrpE are required for fully efficient folding. The polypeptide is Protein GrpE (Bordetella bronchiseptica (strain ATCC BAA-588 / NCTC 13252 / RB50) (Alcaligenes bronchisepticus)).